The sequence spans 578 residues: MRVGAFLGRSLFSCSHVRGALVRRRTPQHSCSFHISKPRSLSHVVPVFSRAPLFSERTAMVDQHGKHTYKDLYIRSQALSKMIIQLLGNPSHNNTPERVSFLCPNNSSYVVCQWAVWMSGAIAVPLCKSHPPSELKYVLQDSQSALVVAEESYTNVLSPLAEQLGIPVLTMSGSQNLHPSELLQEIKISQLDLDWKDRGAMIIYTSGTTGRPKGVLSTHYNLYSMVTALVNEWGWTKEDSILHVLPLHHVHGVVNKLMCPLWVGATCVILPEFCPKTVWQHFLGRDVPSINIFMAVPTIYSKLIAYYEQHFTHSNVREFVRAACQERIRLMVSGSSALPVPVLERWQEITGHTLLERYGMTEIGMALTNPLHGPRVPGAVGAPLPGVEVRTVTQNPRKEGTSYTTHAQGDSTGTMVSVGLENREGELQVRGPAVFKEYWNKRLDTQEAFTSDGWFKTGDTAMYKDGTYWILGRTSVDIIKSGGYKVSALEVERHLLGHPSITDVAVIGAPDVTWGQRVAAIVKLRDGHALSLQELKEWARAVMAPYCIPAELIRVEEIPRNQMGKINKKQLLVHFYPQ.

The N-terminal 19 residues, 1–19 (MRVGAFLGRSLFSCSHVRG), are a transit peptide targeting the mitochondrion. Position 205–213 (205–213 (TSGTTGRPK)) interacts with ATP. The segment at 394–413 (QNPRKEGTSYTTHAQGDSTG) is disordered. 3 residues coordinate ATP: Asp-459, Arg-473, and Lys-565.

It belongs to the ATP-dependent AMP-binding enzyme family.

The protein resides in the mitochondrion. The enzyme catalyses tetracosanoate + ATP + CoA = tetracosanoyl-CoA + AMP + diphosphate. It catalyses the reaction malonate + ATP + CoA = malonyl-CoA + AMP + diphosphate. Its function is as follows. Catalyzes the initial reaction in intramitochondrial fatty acid synthesis, by activating malonate and methylmalonate, but not acetate, into their respective CoA thioester. May have some preference toward very-long-chain substrates. The sequence is that of Malonate--CoA ligase ACSF3, mitochondrial from Xenopus laevis (African clawed frog).